Reading from the N-terminus, the 143-residue chain is Transcriptional regulator MraZ (143 aa).

SpoVT-AbrB domains lie at 5 to 47 (TFTP…PREE) and 76 to 119 (ADEQ…DAQA).

This sequence belongs to the MraZ family. In terms of assembly, forms oligomers.

It localises to the cytoplasm. It is found in the nucleoid. The protein is Transcriptional regulator MraZ of Corynebacterium urealyticum (strain ATCC 43042 / DSM 7109).